The primary structure comprises 1392 residues: DNA-directed RNA polymerase subunit beta (1392 aa).

This sequence belongs to the RNA polymerase beta chain family. In terms of assembly, the RNAP catalytic core consists of 2 alpha, 1 beta, 1 beta' and 1 omega subunit. When a sigma factor is associated with the core the holoenzyme is formed, which can initiate transcription.

The catalysed reaction is RNA(n) + a ribonucleoside 5'-triphosphate = RNA(n+1) + diphosphate. DNA-dependent RNA polymerase catalyzes the transcription of DNA into RNA using the four ribonucleoside triphosphates as substrates. In Neisseria meningitidis serogroup B (strain ATCC BAA-335 / MC58), this protein is DNA-directed RNA polymerase subunit beta.